Consider the following 369-residue polypeptide: Flagellar P-ring protein (369 aa).

The N-terminal stretch at 1–22 (MIKLKQLIAATLLLSTAFGVHA) is a signal peptide.

Belongs to the FlgI family. In terms of assembly, the basal body constitutes a major portion of the flagellar organelle and consists of four rings (L,P,S, and M) mounted on a central rod.

It localises to the periplasm. It is found in the bacterial flagellum basal body. In terms of biological role, assembles around the rod to form the L-ring and probably protects the motor/basal body from shearing forces during rotation. The chain is Flagellar P-ring protein from Pseudomonas syringae pv. syringae (strain B728a).